Reading from the N-terminus, the 337-residue chain is Transcription initiation factor IIB (337 aa).

Residues tyrosine 37–aspartate 68 form a TFIIB-type zinc finger. Cysteine 41, cysteine 44, cysteine 60, and cysteine 63 together coordinate Zn(2+). 2 repeat units span residues serine 154–leucine 237 and aspartate 248–glutamate 329.

It belongs to the TFIIB family.

Functionally, stabilizes TBP binding to an archaeal box-A promoter. Also responsible for recruiting RNA polymerase II to the pre-initiation complex (DNA-TBP-TFIIB). The polypeptide is Transcription initiation factor IIB (Methanothrix thermoacetophila (strain DSM 6194 / JCM 14653 / NBRC 101360 / PT) (Methanosaeta thermophila)).